Reading from the N-terminus, the 172-residue chain is MDGYHLPRAQLAAMPDPATAIYRRGAEFTFDGEGFYRLVQRLRERLTAASPTVFAPSFDHAIKDPVPDDVAISPGSRVIILEGLYLSLNREPWSSAAALMDESWFVGVDREIARARLVKRHVTSGIVPDTAAAEHRILSTDFLNADDIVKNRLPVQEMVPGNWRELSQDRLD.

Belongs to the YFH7 family.

ATP-dependent kinase-like protein; part of the gene cluster that mediates the biosynthesis of notoamide, a fungal indole alkaloid that belongs to a family of natural products containing a characteristic bicyclo[2.2.2]diazaoctane core. The first step of notoamide biosynthesis involves coupling of L-proline and L-tryptophan by the bimodular NRPS notE', to produce cyclo-L-tryptophan-L-proline called brevianamide F. The reverse prenyltransferase notF' then acts as a deoxybrevianamide E synthase and converts brevianamide F to deoxybrevianamide E via reverse prenylation at C-2 of the indole ring leading to the bicyclo[2.2.2]diazaoctane core. Deoxybrevianamide E is further hydroxylated at C-6 of the indole ring, likely catalyzed by the cytochrome P450 monooxygenase notG', to yield 6-hydroxy-deoxybrevianamide E. 6-hydroxy-deoxybrevianamide E is a specific substrate of the prenyltransferase notC' for normal prenylation at C-7 to produce 6-hydroxy-7-prenyl-deoxybrevianamide, also called notoamide S. As the proposed pivotal branching point in notoamide biosynthesis, notoamide S can be diverted to notoamide E through an oxidative pyran ring closure putatively catalyzed by either notH' cytochrome P450 monooxygenase or the notD' FAD-linked oxidoreductase. This step would be followed by an indole 2,3-epoxidation-initiated pinacol-like rearrangement catalyzed by the notB' FAD-dependent monooxygenase leading to the formation of notoamide C and notoamide D. On the other hand notoamide S is converted to notoamide T by notH' (or notD'), a bifunctional oxidase that also functions as the intramolecular Diels-Alderase responsible for generation of (-)-notoamide T. To generate antipodal (+)-notoaminide T, notH (or notD) in Aspergillus strain MF297-2 is expected to catalyze a Diels-Alder reaction leading to the opposite stereochemistry. The remaining oxidoreductase notD' (or notH') likely catalyzes the oxidative pyran ring formation to yield (-)-stephacidin A. The FAD-dependent monooxygenase notI' is highly similar to notB' and is predicted to catalyze a similar conversion from (-)-stephacidin A to (+)-notoamide B via the 2,3-epoxidation of (-)-stephacidin A followed by a pinacol-type rearrangement. Finally, it remains unclear which enzyme could be responsible for the final hydroxylation steps leading to notoamide A and sclerotiamide. The function of notQ' in the notoamide biosynthesis has not been determined yet. This Aspergillus versicolor protein is ATP-dependent kinase-like protein notR'.